A 132-amino-acid polypeptide reads, in one-letter code: Profilin-1 (132 aa).

The protein belongs to the profilin family. Occurs in many kinds of cells as a complex with monomeric actin in a 1:1 ratio. In terms of tissue distribution, expressed in the nerve ring during late embryonic stages. In adults, expression is seen in the neurons, vulva and somatic gonad.

It is found in the cytoplasm. The protein localises to the cytoskeleton. In terms of biological role, binds to actin and affects the structure of the cytoskeleton. At high concentrations, profilin prevents the polymerization of actin, whereas it enhances it at low concentrations. By binding to PIP2, it inhibits the formation of IP3 and DG. Also binds to poly(L-proline) and phosphatidylinositol 4,5-bisphosphate micelles. The polypeptide is Profilin-1 (pfn-1) (Caenorhabditis elegans).